The primary structure comprises 158 residues: MSYLPSSFDSDADDLDEMPFLDKMIYHCKQQPLVPLGTLATTGAVLLAVLNVKNGNKRKAQIWFRWRVALQGFTLIALVAGSYIYGTNKNERESHEEQLRKKAKMREQLWIQELERRDEETKLRRQKAELARQKAKEMEQETSKLQQELKDLEERLKK.

One can recognise an HIG1 domain in the interval 5 to 96 (PSSFDSDADD…TNKNERESHE (92 aa)). The next 2 membrane-spanning stretches (helical) occupy residues 32-52 (PLVP…VLNV) and 68-88 (VALQ…YGTN). Residues 88–158 (NKNERESHEE…LKDLEERLKK (71 aa)) adopt a coiled-coil conformation. The disordered stretch occupies residues 128-158 (AELARQKAKEMEQETSKLQQELKDLEERLKK).

Belongs to the RCF1 family. In terms of assembly, associates with the respiratory chain complex III/complex IV supercomplex.

It localises to the mitochondrion membrane. Its function is as follows. Cytochrome c oxidase subunit which plays a role in assembly of respiratory supercomplexes. In Kluyveromyces lactis (strain ATCC 8585 / CBS 2359 / DSM 70799 / NBRC 1267 / NRRL Y-1140 / WM37) (Yeast), this protein is Respiratory supercomplex factor 1, mitochondrial (RCF1).